Consider the following 274-residue polypeptide: NH(3)-dependent NAD(+) synthetase (274 aa).

An ATP-binding site is contributed by 46–53; that stretch reads GISGGQDS. D52 provides a ligand contact to Mg(2+). R140 is a binding site for deamido-NAD(+). T160 is a binding site for ATP. E165 contacts Mg(2+). Deamido-NAD(+) contacts are provided by K173 and D180. ATP-binding residues include K189 and T211. 260 to 261 contributes to the deamido-NAD(+) binding site; that stretch reads HK.

It belongs to the NAD synthetase family. In terms of assembly, homodimer.

The enzyme catalyses deamido-NAD(+) + NH4(+) + ATP = AMP + diphosphate + NAD(+) + H(+). It functions in the pathway cofactor biosynthesis; NAD(+) biosynthesis; NAD(+) from deamido-NAD(+) (ammonia route): step 1/1. Catalyzes the ATP-dependent amidation of deamido-NAD to form NAD. Uses ammonia as a nitrogen source. This is NH(3)-dependent NAD(+) synthetase from Streptococcus pyogenes serotype M3 (strain ATCC BAA-595 / MGAS315).